The chain runs to 472 residues: Nucleoporin NUP49/NSP49 (472 aa).

The stretch at 2 to 3 (FG) is one FG 1 repeat. One copy of the GLFG 1 repeat lies at 14–17 (GLFG). The tract at residues 28–104 (NTGFSFGGTQ…TANTGGGLFG (77 aa)) is disordered. The stretch at 33-34 (FG) is one FG 2 repeat. One copy of the GLFG 2 repeat lies at 48–51 (GLFG). The span at 64–80 (SFGQQQQQSQTNAFGGS) shows a compositional bias: low complexity. FG repeat units follow at residues 65-66 (FG) and 77-78 (FG). GLFG repeat units lie at residues 86–89 (GLFG) and 101–104 (GLFG). The stretch at 113 to 116 (SLFG) is one SLFG 1 repeat. GLFG repeat units lie at residues 125–128 (GLFG) and 148–151 (GLFG). The stretch at 159-162 (SLFG) is one SLFG 2 repeat. The GLFG 7; approximate repeat unit spans residues 175 to 178 (GMFG). The SLFG 3 repeat unit spans residues 185-188 (SLFG). The GLFG 8 repeat unit spans residues 199 to 202 (GLFG). The SLFG 4 repeat unit spans residues 210-213 (SLFG). Residues 211 to 242 (LFGSSNNNNNNNNSNNIMSASGGLFGNQQQQL) are disordered. The span at 214-226 (SSNNNNNNNNSNN) shows a compositional bias: low complexity. Residues 233-236 (GLFG) form a GLFG 9 repeat.

Belongs to the nucleoporin GLFG family. Component of the nuclear pore complex (NPC). NPC constitutes the exclusive means of nucleocytoplasmic transport. NPCs allow the passive diffusion of ions and small molecules and the active, nuclear transport receptor-mediated bidirectional transport of macromolecules such as proteins, RNAs, ribonucleoparticles (RNPs), and ribosomal subunits across the nuclear envelope. Due to its 8-fold rotational symmetry, all subunits are present with 8 copies or multiples thereof. NUP49 is part of the NUP57 subcomplex (NIC96, NSP1, NUP49, NUP57) interacting with NUP57. Interacts through its FG repeats with karyopherins.

It localises to the nucleus. The protein resides in the nuclear pore complex. Its subcellular location is the nucleus membrane. Functionally, functions as a component of the nuclear pore complex (NPC). NPC components, collectively referred to as nucleoporins (NUPs), can play the role of both NPC structural components and of docking or interaction partners for transiently associated nuclear transport factors. Active directional transport is assured by both, a Phe-Gly (FG) repeat affinity gradient for these transport factors across the NPC and a transport cofactor concentration gradient across the nuclear envelope (GSP1 and GSP2 GTPases associated predominantly with GTP in the nucleus, with GDP in the cytoplasm). NUP49 plays an important role in several nuclear transport pathways including poly(A)+ RNA, tRNA, and pre-ribosome transport. The chain is Nucleoporin NUP49/NSP49 (NUP49) from Saccharomyces cerevisiae (strain ATCC 204508 / S288c) (Baker's yeast).